The chain runs to 480 residues: Glutamate--tRNA ligase (480 aa).

The 'HIGH' region motif lies at 9-19 (PSPTGNLHIGT). Residues 247–251 (KLSKR) carry the 'KMSKS' region motif. Lys250 contacts ATP.

Belongs to the class-I aminoacyl-tRNA synthetase family. Glutamate--tRNA ligase type 1 subfamily. Monomer.

It is found in the cytoplasm. The enzyme catalyses tRNA(Glu) + L-glutamate + ATP = L-glutamyl-tRNA(Glu) + AMP + diphosphate. Functionally, catalyzes the attachment of glutamate to tRNA(Glu) in a two-step reaction: glutamate is first activated by ATP to form Glu-AMP and then transferred to the acceptor end of tRNA(Glu). The sequence is that of Glutamate--tRNA ligase from Nostoc sp. (strain PCC 7120 / SAG 25.82 / UTEX 2576).